The following is a 449-amino-acid chain: Ribosomal protein uS12 methylthiotransferase RimO (449 aa).

The MTTase N-terminal domain occupies 16–126 (PKISFVSLGC…VMEAVHAAIA (111 aa)). [4Fe-4S] cluster-binding residues include cysteine 25, cysteine 61, cysteine 90, cysteine 157, cysteine 161, and cysteine 164. Residues 143-381 (LTPRHYAYLK…MEHQQKISAR (239 aa)) enclose the Radical SAM core domain. Positions 384–449 (REKIGKHVSV…DAYDLHGKAV (66 aa)) constitute a TRAM domain.

Belongs to the methylthiotransferase family. RimO subfamily. Requires [4Fe-4S] cluster as cofactor.

It is found in the cytoplasm. It carries out the reaction L-aspartate(89)-[ribosomal protein uS12]-hydrogen + (sulfur carrier)-SH + AH2 + 2 S-adenosyl-L-methionine = 3-methylsulfanyl-L-aspartate(89)-[ribosomal protein uS12]-hydrogen + (sulfur carrier)-H + 5'-deoxyadenosine + L-methionine + A + S-adenosyl-L-homocysteine + 2 H(+). Its function is as follows. Catalyzes the methylthiolation of an aspartic acid residue of ribosomal protein uS12. The sequence is that of Ribosomal protein uS12 methylthiotransferase RimO from Beijerinckia indica subsp. indica (strain ATCC 9039 / DSM 1715 / NCIMB 8712).